Reading from the N-terminus, the 818-residue chain is Piwi-like protein (818 aa).

The 120-residue stretch at 220 to 339 (RINRVLNDNS…ITGELCFLCG (120 aa)) folds into the PAZ domain. Positions 501–800 (KIALVFVPDD…LAELIGKVHK (300 aa)) constitute a Piwi domain.

Belongs to the argonaute family. Piwi subfamily.

This Dugesia japonica (Planarian) protein is Piwi-like protein (iwi).